The following is a 414-amino-acid chain: tRNA(Ile)-lysidine synthase (414 aa).

13 to 18 (SGGIDS) is a binding site for ATP.

It belongs to the tRNA(Ile)-lysidine synthase family.

The protein localises to the cytoplasm. It carries out the reaction cytidine(34) in tRNA(Ile2) + L-lysine + ATP = lysidine(34) in tRNA(Ile2) + AMP + diphosphate + H(+). Its function is as follows. Ligates lysine onto the cytidine present at position 34 of the AUA codon-specific tRNA(Ile) that contains the anticodon CAU, in an ATP-dependent manner. Cytidine is converted to lysidine, thus changing the amino acid specificity of the tRNA from methionine to isoleucine. The chain is tRNA(Ile)-lysidine synthase from Thermotoga maritima (strain ATCC 43589 / DSM 3109 / JCM 10099 / NBRC 100826 / MSB8).